A 202-amino-acid polypeptide reads, in one-letter code: uncharacterized protein (202 aa).

This is an uncharacterized protein from Escherichia coli (Bacteriophage T4).